A 254-amino-acid chain; its full sequence is Putative epimerase LsrE (254 aa).

Residues valine 14–leucine 34 form a helical membrane-spanning segment. Histidine 50, aspartate 52, and histidine 81 together coordinate a divalent metal cation. The active-site Proton acceptor is aspartate 52. Residues histidine 81, glycine 166 to serine 169, aspartate 199 to serine 201, and glycine 221 to serine 222 each bind substrate. An a divalent metal cation-binding site is contributed by aspartate 199. Residue aspartate 199 is the Proton donor of the active site.

Belongs to the ribulose-phosphate 3-epimerase family. Requires a divalent metal cation as cofactor.

Its subcellular location is the cell membrane. In Salmonella choleraesuis (strain SC-B67), this protein is Putative epimerase LsrE (lsrE).